The sequence spans 628 residues: Serine/threonine-protein kinase Nek11 (628 aa).

In terms of domain architecture, Protein kinase spans 30–288; sequence YVLQQKLGSG…AADILKAPYM (259 aa). Residues 36-44 and Lys-62 contribute to the ATP site; that span reads LGSGSFGTV. Asp-159 acts as the Proton acceptor in catalysis. Ser-274 bears the Phosphoserine; by CHEK1 mark. The stretch at 347–385 forms a coiled coil; the sequence is WLRKLQAADERARRLKKIAEENYKENDKRMQALRSRNVG. The segment covering 452–463 has biased composition (acidic residues); sequence SEDSEEQEEEMI. The tract at residues 452-475 is disordered; it reads SEDSEEQEEEMIFSEAGGDTKEEE.

Belongs to the protein kinase superfamily. NEK Ser/Thr protein kinase family. NIMA subfamily. Interacts with NEK2. It depends on Mn(2+) as a cofactor. Mg(2+) serves as cofactor. In terms of processing, phosphorylated by NEK2. Phosphorylation at Ser-274 is important for its activation.

Its subcellular location is the nucleus. It is found in the nucleolus. The enzyme catalyses L-seryl-[protein] + ATP = O-phospho-L-seryl-[protein] + ADP + H(+). It catalyses the reaction L-threonyl-[protein] + ATP = O-phospho-L-threonyl-[protein] + ADP + H(+). Autorepressed by intramolecular binding of the C-terminus which dissociates following phosphorylation by NEK2. Activated in response to DNA damage. Inhibited by zinc. Functionally, protein kinase which plays an important role in the G2/M checkpoint response to DNA damage. Controls degradation of CDC25A by directly phosphorylating it on residues whose phosphorylation is required for BTRC-mediated polyubiquitination and degradation. This is Serine/threonine-protein kinase Nek11 from Mus musculus (Mouse).